The following is a 672-amino-acid chain: MKKLHKILLGLSLPASLAPLSGFISTDADNSQFSLKKSSTEIKGTQSIHLLNLGESLTEEIKEAQKRTPETSFASFKQKFPNKESFVKGFQPIDVYNLLSGWKDAISSFLDKVVELQKKIEEANKIFNTNIGNQIDLPEDENPNVLNVLGSYGGEGFFPTLGKNGLNLPQQIFENFTDFKVVSHKIHDFQVSLVGERDIIKNDKVRFSYAVQIPLNLELLVNNQKVTFNITVDLRTNNFSTQETFNELFNKCIGPVNWQFFSRVKVDKLHYDQTDATHLANTLLQDQFNALNLDLEKSIYDLELPRLEAEFQQKYVDPLIEKKQRQKAEWEEAERIRKEEEEKHQKELEEQQRIQAEKAKNDEQLQKPQTELKKALGGIDSFVEFFTNNDLRLKLGYTKEDNVRTRAGLFRALEVSFGNYRAWTFYITLLGWKDTTEKIFKKAKWQDIRDDEKFRKAFGLSPKATEKDVGKVTNPGYGYQGIYIKDSLRDGIAKYSDSTVSEPKNVKVSLPGTVGDNEEGKIWIASHNFRQNHEWGAGEKFKYSAYRFKFDVTVDYDVEVSAKWWTWAFRGSIPGYWRGKFKVTYSFDGVVPSWKYGHIQVRTPQYSFNKQEQKILFVPHAIQKIAAEGSNLDLINPFLKDQKLDEFEHYHPDLTKPLDLVAYLLYAITTRS.

Belongs to the MG032/MG096/MG288 family.

This is an uncharacterized protein from Mycoplasma pneumoniae (strain ATCC 29342 / M129 / Subtype 1) (Mycoplasmoides pneumoniae).